We begin with the raw amino-acid sequence, 410 residues long: Class E basic helix-loop-helix protein 41 (410 aa).

Residue Lys-31 forms a Glycyl lysine isopeptide (Lys-Gly) (interchain with G-Cter in SUMO2) linkage. Residues 44-99 (TYKLPHRLIEKKRRDRINECIAQLKDLLPEHLKLTTLGHLEKAVVLELTLKHLKAL) enclose the bHLH domain. Lys-121 participates in a covalent cross-link: Glycyl lysine isopeptide (Lys-Gly) (interchain with G-Cter in SUMO2). In terms of domain architecture, Orange spans 131-166 (FHSGFQTCAKEVLQYLARFESWTPREPRCAQLVSHL). Disordered stretches follow at residues 209–255 (IQRT…KRPK) and 360–410 (GATA…KDAP). Lys-240 is covalently cross-linked (Glycyl lysine isopeptide (Lys-Gly) (interchain with G-Cter in SUMO2)).

As to quaternary structure, homodimer. Heterodimer with BHLHE40/DEC1. Interacts with CIART. Interacts with BMAL1. Interacts with RXRA. Interacts with NR0B2 and HNF1A. Expressed in skeletal muscle, brain and lung.

It localises to the nucleus. Transcriptional repressor involved in the regulation of the circadian rhythm by negatively regulating the activity of the clock genes and clock-controlled genes. Acts as the negative limb of a novel autoregulatory feedback loop (DEC loop) which differs from the one formed by the PER and CRY transcriptional repressors (PER/CRY loop). Both these loops are interlocked as it represses the expression of PER1 and in turn is repressed by PER1/2 and CRY1/2. Represses the activity of the circadian transcriptional activator: CLOCK-BMAL1 heterodimer by competing for the binding to E-box elements (5'-CACGTG-3') found within the promoters of its target genes. Negatively regulates its own expression and the expression of DBP and BHLHE41/DEC2. Acts as a corepressor of RXR and the RXR-LXR heterodimers and represses the ligand-induced RXRA/B/G, NR1H3/LXRA, NR1H4 and VDR transactivation activity. Inhibits HNF1A-mediated transactivation of CYP1A2, CYP2E1 and CYP3A11. This is Class E basic helix-loop-helix protein 41 (Bhlhe41) from Mus musculus (Mouse).